Here is a 339-residue protein sequence, read N- to C-terminus: ATP-dependent 6-phosphofructokinase (339 aa).

ATP contacts are provided by residues glycine 11, 72–73 (RY), and 102–105 (GDGS). Position 103 (aspartate 103) interacts with Mg(2+). Substrate is bound by residues 125-127 (TID), arginine 162, and 169-171 (MGR). The active-site Proton acceptor is aspartate 127. Residues 185–187 (GAD) and 214–216 (KSH) each bind ADP. Substrate contacts are provided by residues glutamate 223, arginine 245, and 251-254 (HVIR).

It belongs to the phosphofructokinase type A (PFKA) family. ATP-dependent PFK group I subfamily. Prokaryotic clade 'B1' sub-subfamily. In terms of assembly, homotetramer. Mg(2+) serves as cofactor.

The protein localises to the cytoplasm. The catalysed reaction is beta-D-fructose 6-phosphate + ATP = beta-D-fructose 1,6-bisphosphate + ADP + H(+). The protein operates within carbohydrate degradation; glycolysis; D-glyceraldehyde 3-phosphate and glycerone phosphate from D-glucose: step 3/4. Allosterically activated by ADP and other diphosphonucleosides, and allosterically inhibited by phosphoenolpyruvate. In terms of biological role, catalyzes the phosphorylation of D-fructose 6-phosphate to fructose 1,6-bisphosphate by ATP, the first committing step of glycolysis. The protein is ATP-dependent 6-phosphofructokinase of Streptococcus thermophilus (strain ATCC BAA-491 / LMD-9).